The following is a 220-amino-acid chain: Carbonic anhydrase (220 aa).

Zn(2+)-binding residues include Cys-39, Asp-41, His-98, and Cys-101.

Belongs to the beta-class carbonic anhydrase family. Zn(2+) serves as cofactor.

The enzyme catalyses hydrogencarbonate + H(+) = CO2 + H2O. The chain is Carbonic anhydrase (cynT) from Pseudomonas aeruginosa (strain ATCC 15692 / DSM 22644 / CIP 104116 / JCM 14847 / LMG 12228 / 1C / PRS 101 / PAO1).